A 160-amino-acid polypeptide reads, in one-letter code: Ribosomal RNA large subunit methyltransferase H (160 aa).

S-adenosyl-L-methionine is bound by residues leucine 76, glycine 108, and 127 to 132 (FGRMTF).

The protein belongs to the RNA methyltransferase RlmH family. Homodimer.

It localises to the cytoplasm. It carries out the reaction pseudouridine(1915) in 23S rRNA + S-adenosyl-L-methionine = N(3)-methylpseudouridine(1915) in 23S rRNA + S-adenosyl-L-homocysteine + H(+). Functionally, specifically methylates the pseudouridine at position 1915 (m3Psi1915) in 23S rRNA. In Methylocella silvestris (strain DSM 15510 / CIP 108128 / LMG 27833 / NCIMB 13906 / BL2), this protein is Ribosomal RNA large subunit methyltransferase H.